A 352-amino-acid polypeptide reads, in one-letter code: N-terminal EF-hand calcium-binding protein 1 (352 aa).

Ser4 bears the Phosphoserine mark. EF-hand domains follow at residues 26–61 (KGMSIFLDILRRADKNDDGKLSFEEFKAYFADGVLS) and 60–95 (LSGEELHELFHTIDTHNTNNLDTEELCEYFSQHLGE). Asp39, Asn41, Asp43, Lys45, and Glu50 together coordinate Ca(2+). A coiled-coil region spans residues 135–163 (LLKETLNQLQSLQNSLECAMETTEEQTRQ). Residues 155–202 (ETTEEQTRQERQGPSKPEVLSIQWPGKRSSRRVQRHNSFSPNSPQFNV) are disordered. Residues 190-202 (HNSFSPNSPQFNV) show a composition bias toward polar residues. Residues Ser192 and Ser197 each carry the phosphoserine modification. A coiled-coil region spans residues 209 to 275 (EEDNQWMTQI…EEFQLALKHY (67 aa)). Residues 252-340 (MLVQRQMSVT…LETPELTSTM (89 aa)) form the ABM domain.

Interacts with STX1. May interact with CPNE6. Expressed in brain (at protein level). Expressed in the cerebral cortex only in layer 4, thalamic nuclei (the mediodorsal nucleus), hippocampus (a small band of pyramidal neurons at the boundary between CA1 and CA3), interneurons interspersed throughout the hippocampus proper, interneurons in the hilus, bodies of the neurons but also their dendritic projections (at protein level).

It is found in the cytoplasm. In Mus musculus (Mouse), this protein is N-terminal EF-hand calcium-binding protein 1 (Necab1).